The primary structure comprises 61 residues: Calprismin (61 aa).

In terms of processing, glycosylated. Expressed by the calcifying mantle epithelium and incorporated into the shell's calcitic prismatic layer.

The protein is Calprismin of Pinna nobilis (Noble pen shell).